A 94-amino-acid polypeptide reads, in one-letter code: Co-chaperonin GroES (94 aa).

This sequence belongs to the GroES chaperonin family. As to quaternary structure, heptamer of 7 subunits arranged in a ring. Interacts with the chaperonin GroEL.

The protein resides in the cytoplasm. In terms of biological role, together with the chaperonin GroEL, plays an essential role in assisting protein folding. The GroEL-GroES system forms a nano-cage that allows encapsulation of the non-native substrate proteins and provides a physical environment optimized to promote and accelerate protein folding. GroES binds to the apical surface of the GroEL ring, thereby capping the opening of the GroEL channel. The chain is Co-chaperonin GroES from Ehrlichia canis (strain Jake).